The following is a 63-amino-acid chain: Large ribosomal subunit protein uL29 (63 aa).

Belongs to the universal ribosomal protein uL29 family.

This chain is Large ribosomal subunit protein uL29, found in Yersinia pseudotuberculosis serotype O:1b (strain IP 31758).